Here is a 563-residue protein sequence, read N- to C-terminus: 2-isopropylmalate synthase (563 aa).

The 275-residue stretch at 31 to 305 (PIWMSTDLRD…DPGLDFAQIN (275 aa)) folds into the Pyruvate carboxyltransferase domain. Residues Asp-40, His-244, His-246, and Asn-280 each coordinate Mg(2+). The tract at residues 437–563 (RAEPIEYLSH…EWARLCGGAE (127 aa)) is regulatory domain.

It belongs to the alpha-IPM synthase/homocitrate synthase family. LeuA type 2 subfamily. As to quaternary structure, homodimer. The cofactor is Mg(2+).

Its subcellular location is the cytoplasm. The catalysed reaction is 3-methyl-2-oxobutanoate + acetyl-CoA + H2O = (2S)-2-isopropylmalate + CoA + H(+). It functions in the pathway amino-acid biosynthesis; L-leucine biosynthesis; L-leucine from 3-methyl-2-oxobutanoate: step 1/4. Functionally, catalyzes the condensation of the acetyl group of acetyl-CoA with 3-methyl-2-oxobutanoate (2-ketoisovalerate) to form 3-carboxy-3-hydroxy-4-methylpentanoate (2-isopropylmalate). The chain is 2-isopropylmalate synthase from Parvibaculum lavamentivorans (strain DS-1 / DSM 13023 / NCIMB 13966).